Here is a 298-residue protein sequence, read N- to C-terminus: Myozenin-1 (298 aa).

The tract at residues 1–34 is disordered; it reads MPLSGTPAPNKKRKSSKLIMELTGGGQESSGLNL. Residue S82 is modified to Phosphoserine. A disordered region spans residues 105–173; the sequence is FSYSKGSSGG…TGTGDQAGGE (69 aa). Positions 118-129 are enriched in low complexity; that stretch reads GSSSAGQYGSGQ. Residues 136–172 are compositionally biased toward gly residues; it reads SGSGSGGAGGPGSQTGRGGDAGTTGVGETGTGDQAGG.

It belongs to the myozenin family. As to quaternary structure, interacts with ACTN2, ACTN3, FLNA, FLNB, FLNC, LDB3, PPP3CA and TCAP. Interacts via its C-terminal region with MYOT.

The protein localises to the nucleus. Its subcellular location is the cell projection. The protein resides in the pseudopodium. Myozenins may serve as intracellular binding proteins involved in linking Z-disk proteins such as alpha-actinin, gamma-filamin, TCAP/telethonin, LDB3/ZASP and localizing calcineurin signaling to the sarcomere. Plays an important role in the modulation of calcineurin signaling. May play a role in myofibrillogenesis. In Sus scrofa (Pig), this protein is Myozenin-1 (MYOZ1).